The primary structure comprises 848 residues: Probable disease resistance protein At5g43730 (848 aa).

A coiled-coil region spans residues 25-62 (SNYIHLMESNLDALQKTMEELKNGRDDLLARVSIEEDK). The 303-residue stretch at 137-439 (VAQKIIPKAE…CEGYINPNRY (303 aa)) folds into the NB-ARC domain. 179–186 (GMGGIGKT) serves as a coordination point for ATP. LRR repeat units follow at residues 534-555 (NLST…FFLF), 558-580 (KLVV…ISNL), 582-604 (SLQY…KKLR), 605-627 (KLIY…ATTL), and 629-649 (NLQV…IMEE).

This sequence belongs to the disease resistance NB-LRR family.

In terms of biological role, probable disease resistance protein. The polypeptide is Probable disease resistance protein At5g43730 (Arabidopsis thaliana (Mouse-ear cress)).